We begin with the raw amino-acid sequence, 178 residues long: Transmembrane protein 196 (178 aa).

The next 4 helical transmembrane spans lie at 11–31 (LLVL…VGAV), 47–67 (SSPV…ILCA), 73–93 (LVMI…ILNF), and 106–126 (LYPL…GCTL).

In terms of tissue distribution, expression is significantly decreased in lung cancer cells compared to normal lung tissue (at protein level).

It is found in the cytoplasm. Its subcellular location is the membrane. In terms of biological role, acts as a tumor suppressor in lung cancer. Inhibits tumor cell growth by inhibiting cell proliferation and migration and promoting cell apoptosis. Inhibits metastasis of lung cancer by suppressing beta-catenin expression in the Wnt/beta-catenin signaling pathway. This is Transmembrane protein 196 (TMEM196) from Homo sapiens (Human).